A 1199-amino-acid polypeptide reads, in one-letter code: DNA-directed RNA polymerase subunit beta' (1199 aa).

Zn(2+)-binding residues include Cys60, Cys62, Cys75, and Cys78. Mg(2+) contacts are provided by Asp449, Asp451, and Asp453. 4 residues coordinate Zn(2+): Cys818, Cys892, Cys899, and Cys902.

The protein belongs to the RNA polymerase beta' chain family. As to quaternary structure, the RNAP catalytic core consists of 2 alpha, 1 beta, 1 beta' and 1 omega subunit. When a sigma factor is associated with the core the holoenzyme is formed, which can initiate transcription. Mg(2+) serves as cofactor. Requires Zn(2+) as cofactor.

It carries out the reaction RNA(n) + a ribonucleoside 5'-triphosphate = RNA(n+1) + diphosphate. Its function is as follows. DNA-dependent RNA polymerase catalyzes the transcription of DNA into RNA using the four ribonucleoside triphosphates as substrates. This chain is DNA-directed RNA polymerase subunit beta', found in Bacillus licheniformis (strain ATCC 14580 / DSM 13 / JCM 2505 / CCUG 7422 / NBRC 12200 / NCIMB 9375 / NCTC 10341 / NRRL NRS-1264 / Gibson 46).